We begin with the raw amino-acid sequence, 157 residues long: NADPH-dependent 7-cyano-7-deazaguanine reductase (157 aa).

Cys-56 serves as the catalytic Thioimide intermediate. The active-site Proton donor is Asp-63. Substrate-binding positions include 78–80 (VES) and 97–98 (HE).

This sequence belongs to the GTP cyclohydrolase I family. QueF type 1 subfamily.

The protein localises to the cytoplasm. The enzyme catalyses 7-aminomethyl-7-carbaguanine + 2 NADP(+) = 7-cyano-7-deazaguanine + 2 NADPH + 3 H(+). It functions in the pathway tRNA modification; tRNA-queuosine biosynthesis. In terms of biological role, catalyzes the NADPH-dependent reduction of 7-cyano-7-deazaguanine (preQ0) to 7-aminomethyl-7-deazaguanine (preQ1). This Parabacteroides distasonis (strain ATCC 8503 / DSM 20701 / CIP 104284 / JCM 5825 / NCTC 11152) protein is NADPH-dependent 7-cyano-7-deazaguanine reductase.